Consider the following 215-residue polypeptide: Protein C' (215 aa).

A disordered region spans residues 12–34; that stretch reads MPSFLKKILKLRGRRQEDESRSR. The tract at residues 15-22 is involved in self-degradation and in host STAT1 degradation; it reads FLKKILKL.

The protein belongs to the respirovirus protein C family. As to quaternary structure, the different isoforms interact (via C-terminus) with unphosphorylated and phosphorylated human STAT1 (via N-terminus), favoring the formation of parallel STAT1 homodimers. The different isoforms do not interact with host STAT2. C protein interacts with L protein; this interaction has an inhibitory effect on viral transcription and replication. Post-translationally, Y1 and Y2 proteins are produced not only by alternative initiation, but also by proteolytic cleavage of C'. Only alternative initiation is detected in vitro, whereas in vivo cleavage seems to be predominant.

It is found in the host cytoplasm. In terms of biological role, the different products prevent the establishment of cellular antiviral state by blocking the interferon-alpha/beta (IFN-alpha/beta) and IFN-gamma signaling pathways. They inhibit IFN-alpha/beta induced tyrosine phosphorylation of STAT1 and STAT2. Blocking the IFN-alpha/beta pathway requires binding to STAT1 in the cytoplasm. They inhibit IFN-gamma induced serine phosphorylation of STAT1. Block the IFN-gamma pathway by binding to and stabilizing the parallel form of the STAT1 dimer, further inducing high-molecular-weight complex formation and inhibition of transcription by IFN-gamma. May also have a role in preventing the cell to enter apoptosis. Modulate regulation of viral transcription and replication. Overexpression inhibits the viral RNA polymerase. The absence of all C', C, Y1 and Y2 proteins leads to viral delayed growth. Plays an important role in virion particles release. Modulates virion shape. The chain is Protein C' (P/V/C) from Sendai virus (strain Nagoya) (SeV).